Here is a 239-residue protein sequence, read N- to C-terminus: Phosphoribosylaminoimidazole-succinocarboxamide synthase (239 aa).

This sequence belongs to the SAICAR synthetase family.

It catalyses the reaction 5-amino-1-(5-phospho-D-ribosyl)imidazole-4-carboxylate + L-aspartate + ATP = (2S)-2-[5-amino-1-(5-phospho-beta-D-ribosyl)imidazole-4-carboxamido]succinate + ADP + phosphate + 2 H(+). It functions in the pathway purine metabolism; IMP biosynthesis via de novo pathway; 5-amino-1-(5-phospho-D-ribosyl)imidazole-4-carboxamide from 5-amino-1-(5-phospho-D-ribosyl)imidazole-4-carboxylate: step 1/2. In Campylobacter hominis (strain ATCC BAA-381 / DSM 21671 / CCUG 45161 / LMG 19568 / NCTC 13146 / CH001A), this protein is Phosphoribosylaminoimidazole-succinocarboxamide synthase.